The sequence spans 327 residues: MSKDIRVLLYYKYVPIENAKEYAAEHLAFCKSIGLKGRILIADEGINGTVSGDYETTQKYMDYVHANPLFSDLWFKIDEENEQAFKKMFVRYKKEIVHLGLEDNDFDNDIDPLVTTGAYLSPKEFKEALLDEDTVVLDTRNDYEYDLGHFRGAIRPDIRNFRELPQWVRDNKEKFMDKRVVVYCTGGVRCEKFSGWMVREGYKDVGQLHGGIATYGKDPEVRGELWDGKMYVFDERIAVDVNHVNPVVVGKDWFDGTPCERYVNCGNPFCNRRILTSEENEHKYVRGCSAECRAHERNRYISENGLTRQEWAERLEAIGETLTPANA.

Residues 130 to 224 (LDEDTVVLDT…YGKDPEVRGE (95 aa)) enclose the Rhodanese domain. Catalysis depends on cysteine 184, which acts as the Cysteine persulfide intermediate.

The protein belongs to the TrhO family.

It carries out the reaction uridine(34) in tRNA + AH2 + O2 = 5-hydroxyuridine(34) in tRNA + A + H2O. Catalyzes oxygen-dependent 5-hydroxyuridine (ho5U) modification at position 34 in tRNAs. This is tRNA uridine(34) hydroxylase from Streptococcus suis (strain 98HAH33).